The following is a 72-amino-acid chain: Multiple antibiotic resistance protein MarB (72 aa).

The chain is Multiple antibiotic resistance protein MarB (marB) from Escherichia coli (strain K12).